The primary structure comprises 2169 residues: Vitellogenin-A1 (2169 aa).

An N-terminal signal peptide occupies residues 1–46 (MATDGITSRFGFNERRRTHNRNSCRILEDKMLAKLLLLALAGLTAA). Asparagine 107 and asparagine 125 each carry an N-linked (GlcNAc...) asparagine glycan. Residues 116 to 1008 (WMPNYEYVYN…SNDHRYPSGL (893 aa)) enclose the Vitellogenin domain. Sulfotyrosine is present on residues tyrosine 159 and tyrosine 163. N-linked (GlcNAc...) asparagine glycans are attached at residues asparagine 360, asparagine 391, and asparagine 435. Disordered regions lie at residues 426–481 (DKKN…DKVE) and 514–570 (NDTS…SSSE). Low complexity predominate over residues 438-461 (SSSSSSSSSSSSSSSESSSSSSES). Asparagine 514 carries an N-linked (GlcNAc...) asparagine glycan. Low complexity predominate over residues 517-531 (SSDSSSSDSSSSSSS). N-linked (GlcNAc...) asparagine glycosylation is present at asparagine 538. Residues 541–570 (SSYSSSSSSSSSSSSSESSSYSSSSSSSSE) are compositionally biased toward low complexity. Asparagine 587, asparagine 763, and asparagine 781 each carry an N-linked (GlcNAc...) asparagine glycan. Sulfotyrosine is present on residues tyrosine 1067, tyrosine 1070, and tyrosine 1074. Asparagine 1140, asparagine 1233, and asparagine 1336 each carry an N-linked (GlcNAc...) asparagine glycan. Sulfotyrosine is present on residues tyrosine 1563, tyrosine 1564, and tyrosine 1570. N-linked (GlcNAc...) asparagine glycans are attached at residues asparagine 1652 and asparagine 1696. Sulfotyrosine occurs at positions 1737, 1806, 1809, 1822, 1824, and 1888. In terms of domain architecture, VWFD spans 1770-1979 (PSCSFSNDYF…SYAITGQNCT (210 aa)). 2 cysteine pairs are disulfide-bonded: cysteine 1772–cysteine 1942 and cysteine 1794–cysteine 1978. Residue asparagine 1977 is glycosylated (N-linked (GlcNAc...) asparagine). Positions 2026-2063 (EESSSSSSSSSSDSSSSSSSSESSSRSRSGSSSSSSSS) are enriched in low complexity. Positions 2026-2081 (EESSSSSSSSSSDSSSSSSSSESSSRSRSGSSSSSSSSEEQKEFHPHKQEHSMKEC) are disordered. Basic and acidic residues predominate over residues 2064-2079 (EEQKEFHPHKQEHSMK).

In terms of processing, glycosylated, phosphorylated and sulfated. The large subunit is sulfated more extensively than the small one. In terms of tissue distribution, produced by the fat body, where it is cleaved in the rough endoplasmic reticulum or cis-Golgi before being secreted into hemolymph. It is then sequestered by a single class of receptor mediated endocytosis in the ovary.

Functionally, precursor of the egg-yolk proteins that are sources of nutrients during embryonic development. May supply aromatic amino acids to the cuticle of rapidly developing embryos. The protein is Vitellogenin-A1 (VGA1) of Aedes aegypti (Yellowfever mosquito).